A 185-amino-acid chain; its full sequence is Nodulin-20 (185 aa).

The signal sequence occupies residues 1–17 (MRVVLITLFLFIGAAVA).

Belongs to the nodulin 20 family.

It is found in the symbiosome. The protein resides in the peribacteroid membrane. It localises to the peribacteroid space. The protein is Nodulin-20 of Glycine max (Soybean).